The sequence spans 718 residues: Tensin-4 (718 aa).

Residues 1 to 14 (MSSSLLTGGHVVSL) form the signal peptide. 2 disordered regions span residues 188–244 (RETR…GLRA) and 272–437 (LPHS…AKDM). The segment covering 192–207 (SSSNESLIFSGNQGRG) has biased composition (polar residues). Residues 208 to 219 (SSPHTPSSLSNS) show a composition bias toward low complexity. Ser230 bears the Phosphoserine mark. Residues 272–304 (LPHSSLSSYPPSSRSLGSPASSSSSLHSLDRGS) are compositionally biased toward low complexity. Composition is skewed to polar residues over residues 306-316 (CVRSSDAQVPS), 337-349 (QASS…TNSM), 367-393 (PAQQ…QATK), and 405-415 (TSPSHLCQATK). Residues 451 to 558 (WFKPSITREQ…ALPCKLTIPQ (108 aa)) form the SH2 domain. Positions 585–711 (CHTLYLTSVS…SQVISLVTAL (127 aa)) constitute a PTB domain.

Belongs to the PTEN phosphatase protein family. In terms of assembly, interacts (via SH2 domain) with Rho GTPase-activating protein DLC1 (via C-terminus); the interaction is independent of DLC1 tyrosine phosphorylation. Interacts with integrin ITGB1; the interaction displaces tensin TNS3 from the ITGB1 cytoplasmic tail and promotes ITGB1 stability. Interacts (via SH2 domain) with E3 ubiquitin-protein ligase CBL (phosphorylated on 'Tyr-781'); the interaction is enhanced in the presence of EGF and reduces interaction of CBL with EGFR. Interacts (via SH2 domain) with receptor tyrosine kinase MET (when phosphorylated); the interaction increases MET protein stability.

It localises to the cell junction. The protein localises to the focal adhesion. The protein resides in the cytoplasm. It is found in the cytoskeleton. Its function is as follows. Promotes EGF-induced cell migration by displacing tensin TNS3 from the cytoplasmic tail of integrin ITGB1 which results in dissociation of TNS3 from focal adhesions, disassembly of actin stress fibers and initiation of cell migration. Suppresses ligand-induced degradation of EGFR by reducing EGFR ubiquitination in the presence of EGF. Increases MET protein stability by inhibiting MET endocytosis and subsequent lysosomal degradation which leads to increased cell survival, proliferation and migration. The chain is Tensin-4 (Tns4) from Rattus norvegicus (Rat).